The primary structure comprises 428 residues: Dihydroorotase (428 aa).

The Zn(2+) site is built by His-59 and His-61. Substrate contacts are provided by residues 61–63 (HLR) and Asn-93. Residues Asp-151, His-178, and His-231 each contribute to the Zn(2+) site. Asn-277 serves as a coordination point for substrate. Asp-304 contributes to the Zn(2+) binding site. Asp-304 is an active-site residue. Residues His-308 and 322-323 (FG) contribute to the substrate site.

It belongs to the metallo-dependent hydrolases superfamily. DHOase family. Class I DHOase subfamily. Zn(2+) is required as a cofactor.

The catalysed reaction is (S)-dihydroorotate + H2O = N-carbamoyl-L-aspartate + H(+). Its pathway is pyrimidine metabolism; UMP biosynthesis via de novo pathway; (S)-dihydroorotate from bicarbonate: step 3/3. In terms of biological role, catalyzes the reversible cyclization of carbamoyl aspartate to dihydroorotate. This is Dihydroorotase from Bacillus cereus (strain ATCC 10987 / NRS 248).